Reading from the N-terminus, the 122-residue chain is Large ribosomal subunit protein uL14 (122 aa).

It belongs to the universal ribosomal protein uL14 family. In terms of assembly, part of the 50S ribosomal subunit. Forms a cluster with proteins L3 and L19. In the 70S ribosome, L14 and L19 interact and together make contacts with the 16S rRNA in bridges B5 and B8.

Its function is as follows. Binds to 23S rRNA. Forms part of two intersubunit bridges in the 70S ribosome. The protein is Large ribosomal subunit protein uL14 of Streptococcus uberis (strain ATCC BAA-854 / 0140J).